A 269-amino-acid chain; its full sequence is UPF0328 protein ECU03_0020 (269 aa).

Belongs to the UPF0328 family.

The protein is UPF0328 protein ECU03_0020 of Encephalitozoon cuniculi (strain GB-M1) (Microsporidian parasite).